Here is a 1101-residue protein sequence, read N- to C-terminus: Selenocysteine insertion sequence-binding protein 2-like (1101 aa).

Disordered regions lie at residues 154–206 (LGQV…AGPD), 240–295 (LWKS…PDSG), 320–387 (QKKP…SESL), 884–1010 (TSDG…ISVE), and 1030–1101 (TLQL…TQTT). Positions 255–265 (AESSSEQGASE) are enriched in low complexity. Phosphoserine is present on Ser-276. A compositionally biased stretch (polar residues) spans 327-346 (KNQTFSRGGRQTEQRNNSQV). 2 stretches are compositionally biased toward basic and acidic residues: residues 356–371 (SSERRQNLQKRPDNKH) and 892–908 (ENEKEVSCKHSTSEKPS). Positions 925–939 (ATGSTTSATSAGKST) are enriched in low complexity. Residues 940–950 (ASDKEEVKPDD) show a composition bias toward basic and acidic residues. A compositionally biased stretch (polar residues) spans 954 to 964 (ASQQSTETGSL). Residues 988–1002 (LEEEEDEDEEEEEDY) are compositionally biased toward acidic residues. Polar residues predominate over residues 1030 to 1039 (TLQLGKTLNG). The span at 1040–1057 (SEEDNVEQSGEEEAEAPE) shows a compositional bias: acidic residues. Positions 1070-1087 (ADQQASPGQQKSSNCSSL) are enriched in polar residues.

Its function is as follows. Binds SECIS (Sec insertion sequence) elements present on selenocysteine (Sec) protein mRNAs, but does not promote Sec incorporation into selenoproteins in vitro. The sequence is that of Selenocysteine insertion sequence-binding protein 2-like (SECISBP2L) from Homo sapiens (Human).